Here is a 695-residue protein sequence, read N- to C-terminus: Putative pentatricopeptide repeat-containing protein At1g77010, mitochondrial (695 aa).

The N-terminal 64 residues, 1-64, are a transit peptide targeting the mitochondrion; that stretch reads MILKYNSSYR…KGFLSSIVIV (64 aa). 17 PPR repeats span residues 61–91, 92–122, 123–157, 159–184, 186–220, 221–251, 252–282, 283–313, 317–351, 352–382, 383–417, 418–448, 449–483, 484–514, 515–549, 550–585, and 586–616; these read IVIV…MPDR, NYFS…MPER, DGYS…DVVT, NSLL…LNFS, DAIT…GVEC, DSKM…IREP, DDHS…KSNR, CVIL…MRNE, DSRT…GLID, DIVV…VESY, DTIL…SLIS, WNSM…DLPT, DEVS…GLDS, DQVV…MVKS, DEVP…GIRP, TQIT…GFVP, and DKEH…MPFD. Positions 621 to 695 are type E motif; degenerate; sequence MWSSILRGCV…KNPGSSWTDC (75 aa).

It belongs to the PPR family. PCMP-E subfamily.

The protein localises to the mitochondrion. The chain is Putative pentatricopeptide repeat-containing protein At1g77010, mitochondrial (PCMP-E5) from Arabidopsis thaliana (Mouse-ear cress).